A 244-amino-acid chain; its full sequence is 5-oxoprolinase subunit A (244 aa).

The protein belongs to the LamB/PxpA family. In terms of assembly, forms a complex composed of PxpA, PxpB and PxpC.

The catalysed reaction is 5-oxo-L-proline + ATP + 2 H2O = L-glutamate + ADP + phosphate + H(+). Its function is as follows. Catalyzes the cleavage of 5-oxoproline to form L-glutamate coupled to the hydrolysis of ATP to ADP and inorganic phosphate. This is 5-oxoprolinase subunit A from Salmonella typhi.